A 777-amino-acid polypeptide reads, in one-letter code: Ethylene receptor 4 (777 aa).

3 consecutive transmembrane segments (helical) span residues 49–69 (LLIA…ATCA), 77–97 (AVLH…LAAF), and 113–133 (AAKV…LTFI). Cys-88 and His-92 together coordinate Cu cation. The GAF domain maps to 184 to 344 (DAHAILRTTA…VVADQAAVAL (161 aa)). Residues 387-521 (AMCHAMRRPV…NTESGACRLS (135 aa)) enclose the Histidine kinase domain. A Phosphohistidine; by autocatalysis modification is found at His-390. The region spanning 645–774 (RVLLADDDAM…ALGAQLCRVL (130 aa)) is the Response regulatory domain. The residue at position 696 (Asp-696) is a 4-aspartylphosphate.

This sequence belongs to the ethylene receptor family. The cofactor is Cu cation.

The protein localises to the endoplasmic reticulum membrane. The catalysed reaction is ATP + protein L-histidine = ADP + protein N-phospho-L-histidine.. Ethylene receptor related to bacterial two-component regulators. Acts as a redundant negative regulator of ethylene signaling. The sequence is that of Ethylene receptor 4 from Oryza sativa subsp. indica (Rice).